The following is a 124-amino-acid chain: Small ribosomal subunit protein uS12 (124 aa).

3-methylthioaspartic acid is present on aspartate 89. The segment at 104–124 (TAGVKDRRQSRSKYGAKAPKE) is disordered.

This sequence belongs to the universal ribosomal protein uS12 family. As to quaternary structure, part of the 30S ribosomal subunit. Contacts proteins S8 and S17. May interact with IF1 in the 30S initiation complex.

With S4 and S5 plays an important role in translational accuracy. In terms of biological role, interacts with and stabilizes bases of the 16S rRNA that are involved in tRNA selection in the A site and with the mRNA backbone. Located at the interface of the 30S and 50S subunits, it traverses the body of the 30S subunit contacting proteins on the other side and probably holding the rRNA structure together. The combined cluster of proteins S8, S12 and S17 appears to hold together the shoulder and platform of the 30S subunit. The sequence is that of Small ribosomal subunit protein uS12 from Synechococcus sp. (strain CC9605).